A 241-amino-acid chain; its full sequence is Chloride intracellular channel protein 1 (241 aa).

At alanine 2 the chain carries N-acetylalanine. A required for insertion into the membrane region spans residues 2 to 90 (AEEQPQVELF…EEFLEAVLCP (89 aa)). Lysine 13 is modified (N6-acetyllysine). Residues 24-27 (CPFS) carry the G-site motif. Cysteine 24 and cysteine 59 are disulfide-bonded. Residues 26-46 (FSQRLFMVLWLKGVTFNVTTV) form a helical membrane-spanning segment. The 141-residue stretch at 93–233 (YPKLAALNPE…PDDEEIELAY (141 aa)) folds into the GST C-terminal domain. The residue at position 119 (lysine 119) is an N6-acetyllysine. Serine 121 is subject to Phosphoserine. Residue lysine 131 is modified to N6-acetyllysine. Residues serine 156 and serine 211 each carry the phosphoserine modification. At tyrosine 233 the chain carries Phosphotyrosine.

It belongs to the chloride channel CLIC family. Monomer. Homodimer (in vitro). Interacts with TRAPPC2. Dimerization requires a conformation change that leads to the exposure of a large hydrophobic surface. In vivo, this may lead to membrane insertion.

Its subcellular location is the nucleus. The protein localises to the nucleus membrane. It is found in the cytoplasm. The protein resides in the cell membrane. It localises to the endoplasmic reticulum. It catalyses the reaction L-dehydroascorbate + 2 glutathione = glutathione disulfide + L-ascorbate. It carries out the reaction chloride(in) = chloride(out). The enzyme catalyses iodide(out) = iodide(in). The catalysed reaction is thiocyanate(in) = thiocyanate(out). It catalyses the reaction nitrate(in) = nitrate(out). It carries out the reaction bromide(in) = bromide(out). The enzyme catalyses fluoride(in) = fluoride(out). Functionally, in the soluble state, catalyzes glutaredoxin-like thiol disulfide exchange reactions with reduced glutathione as electron donor. Reduces selenite and dehydroascorbate and may act as an antioxidant during oxidative stress response. Can insert into membranes and form voltage-dependent multi-ion conductive channels. Membrane insertion seems to be redox-regulated and may occur only under oxidizing conditions. Involved in regulation of the cell cycle. This Oryctolagus cuniculus (Rabbit) protein is Chloride intracellular channel protein 1 (CLIC1).